Reading from the N-terminus, the 84-residue chain is RQC P-site tRNA stabilizing factor (84 aa).

The 64-residue stretch at 1–64 folds into the S4 RNA-binding domain; sequence MRIDKFLQSV…IEEYTILQIP (64 aa).

This sequence belongs to the RqcP family. Associates with stalled 50S ribosomal subunits. Binds to RqcH, 23S rRNA and the P-site tRNA. Does not require RqcH for association with 50S subunits.

Its function is as follows. Key component of the ribosome quality control system (RQC), a ribosome-associated complex that mediates the extraction of incompletely synthesized nascent chains from stalled ribosomes and their subsequent degradation. RqcH recruits Ala-charged tRNA, and with RqcP directs the elongation of stalled nascent chains on 50S ribosomal subunits, leading to non-templated C-terminal alanine extensions (Ala tail). The Ala tail promotes nascent chain degradation. RqcP is associated with the translocation-like movement of the peptidyl-tRNA from the A-site into the P-site. In Helicobacter pylori (strain J99 / ATCC 700824) (Campylobacter pylori J99), this protein is RQC P-site tRNA stabilizing factor.